Reading from the N-terminus, the 75-residue chain is uncharacterized protein (75 aa).

The helical transmembrane segment at 7–26 (ATAPLFVIVGLAVVLTGATG) threads the bilayer.

It localises to the membrane. This is an uncharacterized protein from Dictyostelium discoideum (Social amoeba).